A 423-amino-acid chain; its full sequence is Diaminobutyrate--2-oxoglutarate transaminase (423 aa).

At lysine 271 the chain carries N6-(pyridoxal phosphate)lysine.

It belongs to the class-III pyridoxal-phosphate-dependent aminotransferase family. Requires pyridoxal 5'-phosphate as cofactor.

The catalysed reaction is L-2,4-diaminobutanoate + 2-oxoglutarate = L-aspartate 4-semialdehyde + L-glutamate. Its pathway is amine and polyamine biosynthesis; ectoine biosynthesis; L-ectoine from L-aspartate 4-semialdehyde: step 1/3. In terms of biological role, catalyzes reversively the conversion of L-aspartate beta-semialdehyde (ASA) to L-2,4-diaminobutyrate (DABA) by transamination with L-glutamate. The sequence is that of Diaminobutyrate--2-oxoglutarate transaminase (ectB) from Streptomyces avermitilis (strain ATCC 31267 / DSM 46492 / JCM 5070 / NBRC 14893 / NCIMB 12804 / NRRL 8165 / MA-4680).